Here is a 207-residue protein sequence, read N- to C-terminus: Ribosome maturation factor RimP (207 aa).

Belongs to the RimP family.

It is found in the cytoplasm. Its function is as follows. Required for maturation of 30S ribosomal subunits. This Parvibaculum lavamentivorans (strain DS-1 / DSM 13023 / NCIMB 13966) protein is Ribosome maturation factor RimP.